A 184-amino-acid chain; its full sequence is Ribosome-recycling factor (184 aa).

It belongs to the RRF family.

The protein resides in the cytoplasm. Responsible for the release of ribosomes from messenger RNA at the termination of protein biosynthesis. May increase the efficiency of translation by recycling ribosomes from one round of translation to another. The protein is Ribosome-recycling factor of Caldicellulosiruptor bescii (strain ATCC BAA-1888 / DSM 6725 / KCTC 15123 / Z-1320) (Anaerocellum thermophilum).